A 306-amino-acid chain; its full sequence is Ornithine carbamoyltransferase (306 aa).

Residues 53 to 56 (STRT), Gln80, Arg104, and 131 to 134 (HPCQ) each bind carbamoyl phosphate. Residues Asn162, Asp219, and 223 to 224 (SM) each bind L-ornithine. Residues 259-260 (CL) and Arg287 contribute to the carbamoyl phosphate site.

The protein belongs to the aspartate/ornithine carbamoyltransferase superfamily. OTCase family.

The protein localises to the cytoplasm. The enzyme catalyses carbamoyl phosphate + L-ornithine = L-citrulline + phosphate + H(+). It functions in the pathway amino-acid biosynthesis; L-arginine biosynthesis; L-arginine from L-ornithine and carbamoyl phosphate: step 1/3. Functionally, reversibly catalyzes the transfer of the carbamoyl group from carbamoyl phosphate (CP) to the N(epsilon) atom of ornithine (ORN) to produce L-citrulline. This is Ornithine carbamoyltransferase from Acinetobacter baumannii (strain ATCC 17978 / DSM 105126 / CIP 53.77 / LMG 1025 / NCDC KC755 / 5377).